The chain runs to 134 residues: SNAPIN protein homolog (134 aa).

Residues 50–124 (QLQAELRGQL…EKEQRRRQAL (75 aa)) adopt a coiled-coil conformation.

This sequence belongs to the SNAPIN family. Component of the biogenesis of lysosome-related organelles complex-1 (BLOC-1) composed of Blos1, Blos2, Blos3, Blos4, Dysb, Muted, Pldn and Snapin. Interacts with Blos2 and Dysb.

The protein localises to the membrane. It is found in the cytoplasm. Its subcellular location is the cytosol. In terms of biological role, component of the biogenesis of lysosome-related organelles complex-1 (BLOC-1) involved in pigment granule biogenesis. May participate in the coupling of lysosomes to microtubule plus-end-directed kinesin motor. The protein is SNAPIN protein homolog of Drosophila melanogaster (Fruit fly).